The following is a 295-amino-acid chain: Histamine N-methyltransferase (295 aa).

A2 bears the Blocked amino end (Ala) mark. Position 28 (E28) interacts with substrate. S-adenosyl-L-methionine is bound by residues G60, E89, Q94, S120, and I143. Residue N284 coordinates substrate.

Belongs to the class I-like SAM-binding methyltransferase superfamily. HNMT family. Monomer.

It localises to the cytoplasm. It carries out the reaction histamine + S-adenosyl-L-methionine = N(tau)-methylhistamine + S-adenosyl-L-homocysteine + H(+). In terms of biological role, inactivates histamine by N-methylation. Plays an important role in degrading histamine and in regulating the airway response to histamine. This Rattus norvegicus (Rat) protein is Histamine N-methyltransferase (Hnmt).